Here is a 412-residue protein sequence, read N- to C-terminus: Serine hydroxymethyltransferase (412 aa).

(6S)-5,6,7,8-tetrahydrofolate is bound by residues Leu-117 and 121–123 (GHL). An N6-(pyridoxal phosphate)lysine modification is found at Lys-226. 349-351 (SPF) is a binding site for (6S)-5,6,7,8-tetrahydrofolate.

This sequence belongs to the SHMT family. In terms of assembly, homodimer. It depends on pyridoxal 5'-phosphate as a cofactor.

It localises to the cytoplasm. The catalysed reaction is (6R)-5,10-methylene-5,6,7,8-tetrahydrofolate + glycine + H2O = (6S)-5,6,7,8-tetrahydrofolate + L-serine. The protein operates within one-carbon metabolism; tetrahydrofolate interconversion. It functions in the pathway amino-acid biosynthesis; glycine biosynthesis; glycine from L-serine: step 1/1. Its function is as follows. Catalyzes the reversible interconversion of serine and glycine with tetrahydrofolate (THF) serving as the one-carbon carrier. This reaction serves as the major source of one-carbon groups required for the biosynthesis of purines, thymidylate, methionine, and other important biomolecules. Also exhibits THF-independent aldolase activity toward beta-hydroxyamino acids, producing glycine and aldehydes, via a retro-aldol mechanism. The polypeptide is Serine hydroxymethyltransferase (Halothermothrix orenii (strain H 168 / OCM 544 / DSM 9562)).